The primary structure comprises 154 residues: Small ribosomal subunit protein uS7c (154 aa).

The protein belongs to the universal ribosomal protein uS7 family. As to quaternary structure, part of the 30S ribosomal subunit.

The protein localises to the plastid. Its subcellular location is the chloroplast. Functionally, one of the primary rRNA binding proteins, it binds directly to 16S rRNA where it nucleates assembly of the head domain of the 30S subunit. This chain is Small ribosomal subunit protein uS7c (rps7), found in Pleurastrum terricola (Filamentous green alga).